The primary structure comprises 91 residues: UPF0213 protein NMA2126 (91 aa).

Positions 4–83 (SNWSLYLILC…AAQKRKLWEQ (80 aa)) constitute a GIY-YIG domain.

Belongs to the UPF0213 family.

The polypeptide is UPF0213 protein NMA2126 (Neisseria meningitidis serogroup A / serotype 4A (strain DSM 15465 / Z2491)).